The primary structure comprises 278 residues: MALKKYNPTTPGQRQLVLVDRSALYKGKPVKSLTEGKISNGGRNNTGRITVRFRGGGHKQTYRIVDFKRTKVDVPAKVERLEYDPNRTAFIALIKYEDGEQAYILAPQRLSVGDSVIAGSYVDVKPGNVMPLGNMPVGTIVHNIELKIGKGGQIARSAGTYAQLVGRDHDYVIVRLNSGEQRLVHGRCTATIGAVSNPDHMNISIGKAGRKRWLGRRPHNRGVVMNPIDHPHGGGEGRTSGGRHPVTPWGKPTKGKKTRSNKSTDKFILISRHKRKKK.

Residues Gly-222 to Lys-278 form a disordered region.

Belongs to the universal ribosomal protein uL2 family. Part of the 50S ribosomal subunit. Forms a bridge to the 30S subunit in the 70S ribosome.

One of the primary rRNA binding proteins. Required for association of the 30S and 50S subunits to form the 70S ribosome, for tRNA binding and peptide bond formation. It has been suggested to have peptidyltransferase activity; this is somewhat controversial. Makes several contacts with the 16S rRNA in the 70S ribosome. The polypeptide is Large ribosomal subunit protein uL2 (Rhodopseudomonas palustris (strain BisB5)).